The chain runs to 220 residues: Peptidoglycan hydrolase gp5 (220 aa).

It belongs to the peptidase U40 family. In terms of assembly, monomer.

Its subcellular location is the virion. Functionally, muralytic enzyme exposed to host peptidoglycan layer after membrane fusion during viral entry. Functions as an exolysin that cleaves the peptide bridge formed by meso-diaminopimelic acid and D-alanine. Also lyses the host cell late in infection to release the virions. The chain is Peptidoglycan hydrolase gp5 (P5) from Pseudomonas savastanoi pv. phaseolicola (Pseudomonas syringae pv. phaseolicola).